A 286-amino-acid polypeptide reads, in one-letter code: Formamidopyrimidine-DNA glycosylase (286 aa).

P2 acts as the Schiff-base intermediate with DNA in catalysis. E3 serves as the catalytic Proton donor. K61 (proton donor; for beta-elimination activity) is an active-site residue. 3 residues coordinate DNA: H103, R122, and R164. An FPG-type zinc finger spans residues 250–284 (NAYAQTGEPCGRCGTLIIRESFMNRGSHYCPNCQK). The active-site Proton donor; for delta-elimination activity is R274.

This sequence belongs to the FPG family. In terms of assembly, monomer. It depends on Zn(2+) as a cofactor.

The catalysed reaction is Hydrolysis of DNA containing ring-opened 7-methylguanine residues, releasing 2,6-diamino-4-hydroxy-5-(N-methyl)formamidopyrimidine.. It catalyses the reaction 2'-deoxyribonucleotide-(2'-deoxyribose 5'-phosphate)-2'-deoxyribonucleotide-DNA = a 3'-end 2'-deoxyribonucleotide-(2,3-dehydro-2,3-deoxyribose 5'-phosphate)-DNA + a 5'-end 5'-phospho-2'-deoxyribonucleoside-DNA + H(+). Involved in base excision repair of DNA damaged by oxidation or by mutagenic agents. Acts as a DNA glycosylase that recognizes and removes damaged bases. Has a preference for oxidized purines, such as 7,8-dihydro-8-oxoguanine (8-oxoG). Has AP (apurinic/apyrimidinic) lyase activity and introduces nicks in the DNA strand. Cleaves the DNA backbone by beta-delta elimination to generate a single-strand break at the site of the removed base with both 3'- and 5'-phosphates. The polypeptide is Formamidopyrimidine-DNA glycosylase (Corynebacterium glutamicum (strain ATCC 13032 / DSM 20300 / JCM 1318 / BCRC 11384 / CCUG 27702 / LMG 3730 / NBRC 12168 / NCIMB 10025 / NRRL B-2784 / 534)).